A 978-amino-acid polypeptide reads, in one-letter code: Tyrosine-protein kinase transforming protein fms (978 aa).

Residues 1 to 543 (RMPSGPGHYG…IGAHTPLPDE (543 aa)) lie on the Extracellular side of the membrane. 5 consecutive Ig-like C2-type domains span residues 55-134 (PVIQ…IHLY), 141-231 (PWKV…KVQK), 236-331 (PATL…RVVE), 333-431 (AYSN…LTLR), and 434-533 (PEVR…WPIS). Cysteines 76 and 118 form a disulfide. N-linked (GlcNAc...) asparagine; by host glycosylation is found at Asn79, Asn107, Asn128, Asn187, Asn309, Asn320, Asn336, Asn369, Asn444, Asn511, and Asn524. Intrachain disulfides connect Cys161–Cys211 and Cys258–Cys312. The cysteines at positions 451 and 516 are disulfide-linked. A helical membrane pass occupies residues 544 to 568 (LLFTPVLLTCMSIMALLLLLLLLLL). At 569-978 (YKYKQKPKYQ…PWQRTPPVAR (410 aa)) the chain is on the cytoplasmic side. The Protein kinase domain occupies 613-942 (LQFGKTLGTG…PTFQQICSLL (330 aa)). ATP-binding positions include 619–627 (LGTGAFGKV) and Lys647. Asp810 acts as the Proton acceptor in catalysis. A Phosphotyrosine; by autocatalysis modification is found at Tyr841. A disordered region spans residues 952 to 978 (VPNYTNLPSSSSSRLLRPWQRTPPVAR). A compositionally biased stretch (low complexity) spans 958 to 969 (LPSSSSSRLLRP). At Thr973 the chain carries Phosphothreonine.

This sequence belongs to the protein kinase superfamily. Tyr protein kinase family. CSF-1/PDGF receptor subfamily.

The protein resides in the membrane. The enzyme catalyses L-tyrosyl-[protein] + ATP = O-phospho-L-tyrosyl-[protein] + ADP + H(+). Truncated version of the receptor for colony-stimulating factor 1 (CSF-1). The sequence is that of Tyrosine-protein kinase transforming protein fms (V-FMS) from Felidae (cat family).